A 518-amino-acid chain; its full sequence is Envelope protein (518 aa).

The N-terminal stretch at 1-31 (MSVNRSSIKSLLMVFMIVSSSLLAPVGGAAA) is a signal peptide. Residues 32 to 485 (DEFRTPAASD…IEDREPEAGG (454 aa)) lie on the Extracellular side of the membrane. N-linked (GlcNAc...) (hybrid) asparagine; by host glycosylation is present at asparagine 213. The helical transmembrane segment at 486–506 (FFGSGSTDTMLVGLLALAGVL) threads the bilayer. At 507 to 518 (LLAQSNNRGGRR) the chain is on the cytoplasmic side.

In terms of processing, N-glycosylated by a pentasaccharide comprising glucose, glucuronic acid and a terminal 5-N-formyl-legionaminic acid residue.

It is found in the virion membrane. In terms of biological role, envelope protein that may play a role in host-cell attachment and viral genome entry. The sequence is that of Envelope protein from Halorubrum sp. PV6 (HRPV-1).